A 162-amino-acid chain; its full sequence is Photosystem II extrinsic protein V (162 aa).

The first 26 residues, 1 to 26 (MLKRYMLLAVATVFFAFQVLTSTATA), serve as a signal peptide directing secretion. Residues cysteine 62, cysteine 65, histidine 66, and histidine 117 each coordinate heme c.

The protein belongs to the cytochrome c family. PsbV subfamily. In terms of assembly, PSII is composed of 1 copy each of membrane proteins PsbA, PsbB, PsbC, PsbD, PsbE, PsbF, PsbH, PsbI, PsbJ, PsbK, PsbL, PsbM, PsbT, PsbX, PsbY, PsbZ, Psb30/Ycf12, peripheral proteins PsbO, CyanoQ (PsbQ), PsbU, PsbV and a large number of cofactors. It forms dimeric complexes. Requires heme c as cofactor.

Its subcellular location is the cellular thylakoid membrane. Functionally, one of the extrinsic, lumenal subunits of photosystem II (PSII). PSII is a light-driven water plastoquinone oxidoreductase, using light energy to abstract electrons from H(2)O, generating a proton gradient subsequently used for ATP formation. The extrinsic proteins stabilize the structure of photosystem II oxygen-evolving complex (OEC), the ion environment of oxygen evolution and protect the OEC against heat-induced inactivation. Low-potential cytochrome c that plays a role in the OEC of PSII. The protein is Photosystem II extrinsic protein V of Acaryochloris marina (strain MBIC 11017).